We begin with the raw amino-acid sequence, 464 residues long: F-box/FBD/LRR-repeat protein At1g80470 (464 aa).

The F-box domain maps to 15 to 62 (DWISGLADDLLLQILSKVPTRESVFTSRMSKRWRNLWRHVPALDLDSS). LRR repeat units lie at residues 96–122 (EEHC…TILS), 123–150 (KVNI…TLYS), 152–178 (VFDA…KFDG), 197–222 (IITH…KLES), 223–249 (MRED…SITD), and 273–298 (DAED…TISA). The FBD domain maps to 359-413 (KEEINLSLVPHCFESSLEYVQLKVPITVSETSSKMELAIYFVRNCSVLKKLMLNE).

This chain is F-box/FBD/LRR-repeat protein At1g80470, found in Arabidopsis thaliana (Mouse-ear cress).